Reading from the N-terminus, the 501-residue chain is Cyclin-dependent kinase 19 (501 aa).

Met1 is subject to N-acetylmethionine. The Protein kinase domain maps to Glu21 to Phe335. ATP-binding positions include Val27 to Val35 and Lys52. The Proton acceptor role is filled by Asp151. The disordered stretch occupies residues Asp362–Tyr501. Over residues Asn371 to Pro392 the composition is skewed to low complexity. The segment covering Thr408–Ala421 has biased composition (gly residues). Phosphoserine is present on Ser449. The span at Tyr467–Ser495 shows a compositional bias: low complexity.

Belongs to the protein kinase superfamily. CMGC Ser/Thr protein kinase family. CDC2/CDKX subfamily.

Its subcellular location is the cytoplasm. The protein localises to the perinuclear region. The protein resides in the nucleus. The catalysed reaction is L-seryl-[protein] + ATP = O-phospho-L-seryl-[protein] + ADP + H(+). It carries out the reaction L-threonyl-[protein] + ATP = O-phospho-L-threonyl-[protein] + ADP + H(+). The protein is Cyclin-dependent kinase 19 (Cdk19) of Mus musculus (Mouse).